A 429-amino-acid polypeptide reads, in one-letter code: Ribosomal RNA small subunit methyltransferase B (429 aa).

S-adenosyl-L-methionine contacts are provided by residues 254-260 (CAAPGGK), D277, D303, and D322. C375 functions as the Nucleophile in the catalytic mechanism.

The protein belongs to the class I-like SAM-binding methyltransferase superfamily. RsmB/NOP family.

The protein resides in the cytoplasm. It catalyses the reaction cytidine(967) in 16S rRNA + S-adenosyl-L-methionine = 5-methylcytidine(967) in 16S rRNA + S-adenosyl-L-homocysteine + H(+). Functionally, specifically methylates the cytosine at position 967 (m5C967) of 16S rRNA. The polypeptide is Ribosomal RNA small subunit methyltransferase B (Yersinia pseudotuberculosis serotype O:1b (strain IP 31758)).